The following is a 233-amino-acid chain: Orotidine 5'-phosphate decarboxylase (233 aa).

Substrate is bound by residues Asp11, Lys33, 60–69 (DLKFHDIPNT), Thr120, Arg181, Gln190, Gly210, and Arg211. Lys62 functions as the Proton donor in the catalytic mechanism.

This sequence belongs to the OMP decarboxylase family. Type 1 subfamily. Homodimer.

It catalyses the reaction orotidine 5'-phosphate + H(+) = UMP + CO2. The protein operates within pyrimidine metabolism; UMP biosynthesis via de novo pathway; UMP from orotate: step 2/2. Functionally, catalyzes the decarboxylation of orotidine 5'-monophosphate (OMP) to uridine 5'-monophosphate (UMP). The chain is Orotidine 5'-phosphate decarboxylase from Vibrio parahaemolyticus serotype O3:K6 (strain RIMD 2210633).